Here is a 1286-residue protein sequence, read N- to C-terminus: Galactose/N-acetyl-D-galactosamine lectin heavy subunit 2 (1286 aa).

The first 15 residues, 1–15 (MKLLLLNILLLCCLA), serve as a signal peptide directing secretion. Over 16–1227 (DKLNEFSADI…NNVGAIAAAT (1212 aa)) the chain is Extracellular. N-linked (GlcNAc...) asparagine glycans are attached at residues Asn200, Asn331, Asn384, Asn462, Asn652, Asn883, Asn1197, and Asn1207. A helical membrane pass occupies residues 1228-1248 (TVAVVVVAVVVALIVVSIGLF). The Cytoplasmic segment spans residues 1249 to 1286 (KTYQLVSSAMKNAITTTNENAEYVGADNEATNAATYNG).

As to quaternary structure, heterodimer composed of a 170 kDa heavy subunit (hgl) and a 31/35 kDa light subunit (lgl); disulfide-linked. In terms of processing, N-glycosylated.

The protein resides in the cell membrane. Lectin which binds galactose and N-acetyl-D-galactosamine of host glycoproteins and thus mediates adhesion to host cells. Mediates adherence to host colonic mucins, an essential step for pathogenic tissue invasion. This is Galactose/N-acetyl-D-galactosamine lectin heavy subunit 2 from Entamoeba histolytica (strain ATCC 30459 / HM-1:IMSS / ABRM).